A 120-amino-acid chain; its full sequence is Large ribosomal subunit protein uL18 (120 aa).

The segment at 1-22 (MITKTSKNAARQKRHARVRAKL) is disordered. The span at 10 to 20 (ARQKRHARVRA) shows a compositional bias: basic residues.

Belongs to the universal ribosomal protein uL18 family. In terms of assembly, part of the 50S ribosomal subunit; part of the 5S rRNA/L5/L18/L25 subcomplex. Contacts the 5S and 23S rRNAs.

Functionally, this is one of the proteins that bind and probably mediate the attachment of the 5S RNA into the large ribosomal subunit, where it forms part of the central protuberance. This Bacillus velezensis (strain DSM 23117 / BGSC 10A6 / LMG 26770 / FZB42) (Bacillus amyloliquefaciens subsp. plantarum) protein is Large ribosomal subunit protein uL18.